The following is a 907-amino-acid chain: CRM-domain containing factor CFM3B, chloroplastic (907 aa).

The N-terminal 59 residues, 1 to 59, are a transit peptide targeting the chloroplast; sequence MAINSSHHFCPMTTTTTTSAKFVDSLGSSFCKFHGTSSSISLRSYRFGFSFMKNVKRLS. Disordered regions lie at residues 62–89 and 101–123; these read GSSS…SKVV and LGVI…GSSS. Polar residues predominate over residues 70–84; it reads RNENWNRTQKQNQFR. CRM domains lie at 220–316 and 421–518; these read MTLS…DGSG and STLG…EVGE. The stretch at 621–654 forms a coiled coil; that stretch reads SAKLVRKLERKLAFAEKKLLKAERALAKVEESLK. The 101-residue stretch at 663–763 folds into the CRM 3 domain; it reads EGITEEERFM…KDYKRPTTLR (101 aa). Residues 824–907 form a disordered region; it reads MAYSSDEETE…LQNEELDVQP (84 aa). 2 stretches are compositionally biased toward acidic residues: residues 828–857 and 868–881; these read SDEE…DEEG and TDVE…DTDF. Residues 882–897 show a composition bias toward polar residues; that stretch reads GDNSASSTTPETTFVE.

Interacts with RNA. Part of large ribonucleo-protein particles that contain CAF1 and/or CAF2, and RNC1. Interacts with RFC3 in plastids. Expressed at low levels in roots and shoots.

It localises to the plastid. Its subcellular location is the chloroplast. In terms of biological role, binds specific group II introns in chloroplasts and facilitates their splicing. Exhibits non-specific action during plastid rRNA biogenesis; RFC3 prevents unaccurate splicing to improve the accuracy of plastid rRNA processing. Acts on subgroup IIB introns. The substrates of the subgroup IIB also require the CRM domain proteins CAF1 or CAF2, with a simultaneous binding of CFM3B and CAF1 or CAF2. Required for seed development. The protein is CRM-domain containing factor CFM3B, chloroplastic of Arabidopsis thaliana (Mouse-ear cress).